The sequence spans 447 residues: Probable glycine dehydrogenase (decarboxylating) subunit 1 (447 aa).

It belongs to the GcvP family. N-terminal subunit subfamily. As to quaternary structure, the glycine cleavage system is composed of four proteins: P, T, L and H. In this organism, the P 'protein' is a heterodimer of two subunits.

It carries out the reaction N(6)-[(R)-lipoyl]-L-lysyl-[glycine-cleavage complex H protein] + glycine + H(+) = N(6)-[(R)-S(8)-aminomethyldihydrolipoyl]-L-lysyl-[glycine-cleavage complex H protein] + CO2. Its function is as follows. The glycine cleavage system catalyzes the degradation of glycine. The P protein binds the alpha-amino group of glycine through its pyridoxal phosphate cofactor; CO(2) is released and the remaining methylamine moiety is then transferred to the lipoamide cofactor of the H protein. This Macrococcus caseolyticus (strain JCSC5402) (Macrococcoides caseolyticum) protein is Probable glycine dehydrogenase (decarboxylating) subunit 1.